Consider the following 182-residue polypeptide: Probable RNA 2'-phosphotransferase (182 aa).

This sequence belongs to the KptA/TPT1 family.

Functionally, removes the 2'-phosphate from RNA via an intermediate in which the phosphate is ADP-ribosylated by NAD followed by a presumed transesterification to release the RNA and generate ADP-ribose 1''-2''-cyclic phosphate (APPR&gt;P). May function as an ADP-ribosylase. The sequence is that of Probable RNA 2'-phosphotransferase from Herpetosiphon aurantiacus (strain ATCC 23779 / DSM 785 / 114-95).